Here is a 562-residue protein sequence, read N- to C-terminus: Flagella accessory protein J (562 aa).

The next 9 helical transmembrane spans lie at 32–52 (IVLI…IYLL), 53–73 (LPII…DSQK), 199–219 (VSAM…PFLL), 225–245 (FMAT…VVVI), 273–293 (IISV…KYIV), 302–322 (PYMI…FVAL), 446–466 (FVGV…ASLG), 498–518 (VVEY…AILI), and 527–547 (FVSL…AYIT).

This sequence to M.voltae FlaJ. To M.jannaschii MJ1286.

Its subcellular location is the cell membrane. The protein localises to the archaeal flagellum. The chain is Flagella accessory protein J (flaJ) from Methanocaldococcus jannaschii (strain ATCC 43067 / DSM 2661 / JAL-1 / JCM 10045 / NBRC 100440) (Methanococcus jannaschii).